The chain runs to 294 residues: Energy-coupling factor transporter ATP-binding protein EcfA1 (294 aa).

One can recognise an ABC transporter domain in the interval 27–260; the sequence is IEFENVYFAY…EERLLKMQLD (234 aa). 60–67 contributes to the ATP binding site; it reads GHNGSGKS.

The protein belongs to the ABC transporter superfamily. Energy-coupling factor EcfA family. Forms a stable energy-coupling factor (ECF) transporter complex composed of 2 membrane-embedded substrate-binding proteins (S component), 2 ATP-binding proteins (A component) and 2 transmembrane proteins (T component).

It localises to the cell membrane. Its function is as follows. ATP-binding (A) component of a common energy-coupling factor (ECF) ABC-transporter complex. Unlike classic ABC transporters this ECF transporter provides the energy necessary to transport a number of different substrates. The chain is Energy-coupling factor transporter ATP-binding protein EcfA1 from Ureaplasma parvum serovar 3 (strain ATCC 700970).